The sequence spans 33 residues: Large ribosomal subunit protein eL21 (33 aa).

The protein belongs to the eukaryotic ribosomal protein eL21 family. Component of the large ribosomal subunit.

The protein resides in the cytoplasm. It localises to the cytosol. It is found in the endoplasmic reticulum. Its function is as follows. Component of the large ribosomal subunit. The ribosome is a large ribonucleoprotein complex responsible for the synthesis of proteins in the cell. This chain is Large ribosomal subunit protein eL21 (rpl21), found in Xenopus laevis (African clawed frog).